Here is a 226-residue protein sequence, read N- to C-terminus: UPF0319 protein YpAngola_A3206 (226 aa).

An N-terminal signal peptide occupies residues 1-20 (MKLGLVAGMLAVCFSFSSVA).

This sequence belongs to the UPF0319 family.

The chain is UPF0319 protein YpAngola_A3206 from Yersinia pestis bv. Antiqua (strain Angola).